A 1408-amino-acid polypeptide reads, in one-letter code: DNA-directed RNA polymerase subunit beta' (1408 aa).

The Zn(2+) site is built by cysteine 70, cysteine 72, cysteine 85, and cysteine 88. Residues aspartate 460, aspartate 462, and aspartate 464 each contribute to the Mg(2+) site. Zn(2+)-binding residues include cysteine 814, cysteine 888, cysteine 895, and cysteine 898.

Belongs to the RNA polymerase beta' chain family. As to quaternary structure, the RNAP catalytic core consists of 2 alpha, 1 beta, 1 beta' and 1 omega subunit. When a sigma factor is associated with the core the holoenzyme is formed, which can initiate transcription. It depends on Mg(2+) as a cofactor. Requires Zn(2+) as cofactor.

The enzyme catalyses RNA(n) + a ribonucleoside 5'-triphosphate = RNA(n+1) + diphosphate. In terms of biological role, DNA-dependent RNA polymerase catalyzes the transcription of DNA into RNA using the four ribonucleoside triphosphates as substrates. This Baumannia cicadellinicola subsp. Homalodisca coagulata protein is DNA-directed RNA polymerase subunit beta'.